A 561-amino-acid polypeptide reads, in one-letter code: Guanine nucleotide-binding protein-like 3 (561 aa).

Positions 28–46 are enriched in basic residues; that stretch reads HNRKLKKAAKKQGISRKAK. Disordered regions lie at residues 28–58 and 76–110; these read HNRK…APFK and KEQN…KKAK. Positions 53–98 form a coiled coil; it reads NSAPFKEEVLREAEQRKQELETLKEQNKIVKQQEKAAKRKKEKDAA. Positions 76 to 88 are enriched in basic and acidic residues; it reads KEQNKIVKQQEKA. The region spanning 133 to 319 is the CP-type G domain; it reads CQELNKVIEA…MIDSPGILAA (187 aa). GTP contacts are provided by residues 181–184, 268–275, and 312–315; these read NKID, GFPNVGKS, and DSPG. The tract at residues 486-532 is disordered; sequence ATTTDAEEEKMDTTTNTDEPEAESHISSTVEPIQEPTEKRKDKPAKE. Over residues 521 to 532 the composition is skewed to basic and acidic residues; it reads PTEKRKDKPAKE.

It belongs to the TRAFAC class YlqF/YawG GTPase family.

The protein resides in the nucleus. Its subcellular location is the nucleolus. May play a role in regulating cellular proliferation. The polypeptide is Guanine nucleotide-binding protein-like 3 (gnl3) (Danio rerio (Zebrafish)).